Here is a 968-residue protein sequence, read N- to C-terminus: RNA polymerase-associated protein RapA (968 aa).

Residues 164–334 form the Helicase ATP-binding domain; that stretch reads DVGRRHAPRV…FARLRLLDPN (171 aa). Residue 177 to 184 participates in ATP binding; the sequence is DEVGLGKT. Positions 280-283 match the DEAH box motif; that stretch reads DEAH. Residues 490-685 enclose the Helicase C-terminal domain; it reads RVEWLMGYLT…ALKAQLEQGR (196 aa).

This sequence belongs to the SNF2/RAD54 helicase family. RapA subfamily. Interacts with the RNAP. Has a higher affinity for the core RNAP than for the holoenzyme. Its ATPase activity is stimulated by binding to RNAP.

Its function is as follows. Transcription regulator that activates transcription by stimulating RNA polymerase (RNAP) recycling in case of stress conditions such as supercoiled DNA or high salt concentrations. Probably acts by releasing the RNAP, when it is trapped or immobilized on tightly supercoiled DNA. Does not activate transcription on linear DNA. Probably not involved in DNA repair. The polypeptide is RNA polymerase-associated protein RapA (Salmonella typhimurium (strain LT2 / SGSC1412 / ATCC 700720)).